The following is a 764-amino-acid chain: 5-methyltetrahydropteroyltriglutamate--homocysteine methyltransferase (764 aa).

Residues 16 to 19 (RELK) and Lys-115 contribute to the 5-methyltetrahydropteroyltri-L-glutamate site. Residues 435–437 (IGS) and Glu-488 each bind L-homocysteine. Residues 435-437 (IGS) and Glu-488 each bind L-methionine. Residues 519-520 (RC) and Trp-565 contribute to the 5-methyltetrahydropteroyltri-L-glutamate site. Asp-603 contributes to the L-homocysteine binding site. Residue Asp-603 coordinates L-methionine. Position 609 (Glu-609) interacts with 5-methyltetrahydropteroyltri-L-glutamate. Zn(2+) is bound by residues His-645, Cys-647, and Glu-669. The Proton donor role is filled by His-698. Cys-730 contributes to the Zn(2+) binding site.

This sequence belongs to the vitamin-B12 independent methionine synthase family. Requires Zn(2+) as cofactor.

It carries out the reaction 5-methyltetrahydropteroyltri-L-glutamate + L-homocysteine = tetrahydropteroyltri-L-glutamate + L-methionine. It participates in amino-acid biosynthesis; L-methionine biosynthesis via de novo pathway; L-methionine from L-homocysteine (MetE route): step 1/1. Functionally, catalyzes the transfer of a methyl group from 5-methyltetrahydrofolate to homocysteine resulting in methionine formation. This chain is 5-methyltetrahydropteroyltriglutamate--homocysteine methyltransferase, found in Burkholderia pseudomallei (strain K96243).